Consider the following 264-residue polypeptide: Protein FAM228B (264 aa).

Belongs to the FAM228 family.

The sequence is that of Protein FAM228B (FAM228B) from Bos taurus (Bovine).